A 171-amino-acid chain; its full sequence is MDLRQLIRDIPDYPKEGILFFDITPLLGDPDGFRRAIDLLAERFADSGATKIVAAEARGFIFGAALAYKMGLGFVPVRKPGKLPYKTVSVSYDLEYGSDTLCMHEDALLRDEKVLVIDDLLATGGTLSGVIDLVEHFGADIVGIGVVIELEFLNGKEQLRSYGCESILQIA.

Belongs to the purine/pyrimidine phosphoribosyltransferase family. In terms of assembly, homodimer.

It localises to the cytoplasm. The enzyme catalyses AMP + diphosphate = 5-phospho-alpha-D-ribose 1-diphosphate + adenine. The protein operates within purine metabolism; AMP biosynthesis via salvage pathway; AMP from adenine: step 1/1. In terms of biological role, catalyzes a salvage reaction resulting in the formation of AMP, that is energically less costly than de novo synthesis. The chain is Adenine phosphoribosyltransferase from Solidesulfovibrio magneticus (strain ATCC 700980 / DSM 13731 / RS-1) (Desulfovibrio magneticus).